Reading from the N-terminus, the 331-residue chain is Phospholipase A2 inhibitor (331 aa).

An N-terminal signal peptide occupies residues 1 to 23 (MKSSVPSLLIACLVMSLNSYTQQ). Asn-35 carries N-linked (GlcNAc...) asparagine glycosylation. 8 LRR repeats span residues 78–101 (LPNL…LFRN), 103–125 (PQLH…IFTN), 127–149 (SSLI…WFQT), 150–173 (LGEL…CFDK), 175–197 (KKLT…MFSG), 199–221 (DNLE…TFHW), 223–244 (PKLT…FFQP), and 245–268 (LEQL…VYKT). An N-linked (GlcNAc...) asparagine glycan is attached at Asn-125. N-linked (GlcNAc...) asparagine glycosylation is present at Asn-232. Residue Asn-271 is glycosylated (N-linked (GlcNAc...) asparagine). The region spanning 279–330 (NPWACDCRLDNLLTWVNEHNIHLYSKEEIVCASPKHFKGECATSLHKSQICP) is the LRRCT domain.

Homotrimer.

Its subcellular location is the secreted. Functionally, inhibits the enzymatic activity of the basic phospholipase A2 (PLA2). This Gloydius brevicaudus siniticus (Chinese mamushi) protein is Phospholipase A2 inhibitor.